The sequence spans 434 residues: Alpha-enolase (434 aa).

Ser40 contacts Mg(2+). 2 residues coordinate substrate: His158 and Glu167. The Proton donor role is filled by Glu210. Residues Asp245, Glu293, and Asp318 each coordinate Mg(2+). Residues Glu293 and Asp318 each coordinate substrate. Catalysis depends on Lys343, which acts as the Proton acceptor. Residues 370–373 (SHRS) and Lys394 each bind substrate.

The protein belongs to the enolase family. As to quaternary structure, homodimer. Mg(2+) is required as a cofactor.

It localises to the cytoplasm. It catalyses the reaction (2R)-2-phosphoglycerate = phosphoenolpyruvate + H2O. It participates in carbohydrate degradation; glycolysis; pyruvate from D-glyceraldehyde 3-phosphate: step 4/5. The chain is Alpha-enolase from Alligator mississippiensis (American alligator).